Consider the following 1187-residue polypeptide: RNA helicase Mov10l1 (1187 aa).

Residues 273–347 (RSKSCPGAAA…EPEPGGLIPP (75 aa)) are disordered. Basic and acidic residues-rich tracts occupy residues 296–307 (HHREDKTDEIPE) and 322–339 (ACKEESREKGNTPEKQEP). A run of 5 repeats spans residues 642-652 (TRNDSQSITNI), 653-663 (IRNDGQSITNV), 664-674 (TRNDGQPITKV), 675-685 (TRNNSQSITNI), and 686-696 (TRNDGQPITKN). The 5 X 11 AA tandem repeats of [TI]-R-N-[DN]-[GS]-Q-[SP]-I-T-[NK]-[IVN] stretch occupies residues 642–696 (TRNDSQSITNIIRNDGQSITNVTRNDGQPITKVTRNNSQSITNITRNDGQPITKN). The disordered stretch occupies residues 686 to 727 (TRNDGQPITKNKKTVKDQTKHTTEERHVGTTDQPEKASSTAE). The segment covering 699–720 (TVKDQTKHTTEERHVGTTDQPE) has biased composition (basic and acidic residues). Residue 772–779 (GPPGTGKT) participates in ATP binding. A DEAG box motif is present at residues 888-891 (DEAG).

The protein belongs to the DNA2/NAM7 helicase family. SDE3 subfamily. As to quaternary structure, interacts with PIWIL1. Interacts with PIWIL2. Interacts with PIWIL4. Interacts with HSPA2. Interacts with PLD6. In terms of tissue distribution, isoform 1: Specifically expressed in testis. Isoform 1: In testis, present in pachytene spermatocytes but absent in postmeiotic spermatids (at protein level). Isoform 2: Present in cardiomyocytes (at protein level). Isoform 2: Heart specific. Isoform 3: Heart specific and is specifically expressed in cardiac myocytes.

It localises to the cytoplasm. It catalyses the reaction ATP + H2O = ADP + phosphate + H(+). ATP-dependent RNA helicase required during spermatogenesis to repress transposable elements and prevent their mobilization, which is essential for germline integrity. Acts via the piRNA metabolic process, which mediates the repression of transposable elements during meiosis by forming complexes composed of piRNAs and Piwi proteins and governs the methylation and subsequent repression of transposons. Involved in the primary piRNA metabolic process. Specifically binds to piRNA precursors and promotes the generation of intermediate piRNA processing fragments that are subsequently loaded to Piwi proteins. Acts via its ATP-dependent RNA helicase activity: displays 5'-3' RNA unwinding activity and probably mediates unwinding and funneling of single-stranded piRNA precursor transcripts to the endonuclease that catalyzes the first cleavage step of piRNA processing to generate piRNA intermediate fragments that are subsequently loaded to Piwi proteins. In terms of biological role, may act downstream of MEF2C during heart formation. Acts as a cardiac-specific suppressor of cardiomyocyte hypertrophy and cell cycle progression, suggesting that it may suppress these processes through the regulation of CDKN1A. Such results however require additional evidence. This Mus musculus (Mouse) protein is RNA helicase Mov10l1.